A 51-amino-acid polypeptide reads, in one-letter code: Basic phospholipase A2 Bfon11 (51 aa).

Y27, G29, and G31 together coordinate Ca(2+). C28 and C43 are oxidised to a cystine. Residue H46 is part of the active site. A Ca(2+)-binding site is contributed by D47.

It belongs to the phospholipase A2 family. Group II subfamily. D49 sub-subfamily. Requires Ca(2+) as cofactor. As to expression, expressed by the venom gland.

The protein resides in the secreted. It catalyses the reaction a 1,2-diacyl-sn-glycero-3-phosphocholine + H2O = a 1-acyl-sn-glycero-3-phosphocholine + a fatty acid + H(+). Its function is as follows. Snake venom phospholipase A2 (PLA2) that impairs hemostasis. PLA2 catalyzes the calcium-dependent hydrolysis of the 2-acyl groups in 3-sn-phosphoglycerides. This is Basic phospholipase A2 Bfon11 from Bothrops fonsecai (Fonseca's lancehead).